The primary structure comprises 276 residues: D-aminoacyl-tRNA deacylase (276 aa).

Belongs to the DtdA deacylase family. As to quaternary structure, monomer. It depends on Zn(2+) as a cofactor.

The catalysed reaction is a D-aminoacyl-tRNA + H2O = a tRNA + a D-alpha-amino acid + H(+). The enzyme catalyses glycyl-tRNA(Ala) + H2O = tRNA(Ala) + glycine + H(+). D-aminoacyl-tRNA deacylase with broad substrate specificity. By recycling D-aminoacyl-tRNA to D-amino acids and free tRNA molecules, this enzyme counteracts the toxicity associated with the formation of D-aminoacyl-tRNA entities in vivo. This Korarchaeum cryptofilum (strain OPF8) protein is D-aminoacyl-tRNA deacylase.